A 49-amino-acid polypeptide reads, in one-letter code: Large ribosomal subunit protein eL40 (49 aa).

This sequence belongs to the eukaryotic ribosomal protein eL40 family.

This is Large ribosomal subunit protein eL40 from Natronomonas pharaonis (strain ATCC 35678 / DSM 2160 / CIP 103997 / JCM 8858 / NBRC 14720 / NCIMB 2260 / Gabara) (Halobacterium pharaonis).